A 92-amino-acid chain; its full sequence is MARSLKKGPFVADHLLSKIEKLNEKGEKQVIKTWSRASTIIPDMVGHTIAVHNGKQHVPIFISEQMVGHKLGEFAPTRTFRGHAKSDKKARR.

This sequence belongs to the universal ribosomal protein uS19 family.

Protein S19 forms a complex with S13 that binds strongly to the 16S ribosomal RNA. This is Small ribosomal subunit protein uS19 from Gloeothece citriformis (strain PCC 7424) (Cyanothece sp. (strain PCC 7424)).